The sequence spans 329 residues: Putative HTH-type transcriptional regulatory protein APE_0778 (329 aa).

An HTH cro/C1-type domain is found at 142 to 200 (LREKRLEKGLSLGHLAYMLKTSRKSIYEYERGVMSPSVEKAEKLVDILGEEILEPIDIL). Residues 153-172 (LGHLAYMLKTSRKSIYEYER) constitute a DNA-binding region (H-T-H motif).

In Aeropyrum pernix (strain ATCC 700893 / DSM 11879 / JCM 9820 / NBRC 100138 / K1), this protein is Putative HTH-type transcriptional regulatory protein APE_0778.